The primary structure comprises 353 residues: 11-beta-hydroxysteroid dehydrogenase B (353 aa).

The chain crosses the membrane as a helical; Signal-anchor for type II membrane protein span at residues 10 to 30 (LFVPPASLITLAFSWPALCFP). Residues 13–26 (PPASLITLAFSWPA) carry the Proline-knob motif. Residues 54–80 (GASSGIGEQIAYEYALRRACLVLVARR) and aspartate 105 each bind NADP(+). Serine 184 is a substrate binding site. The Proton acceptor role is filled by tyrosine 197. NADP(+)-binding positions include 197-201 (YAAAK) and lysine 201.

The protein belongs to the short-chain dehydrogenases/reductases (SDR) family. As to expression, expressed in seeds (at protein level).

Its subcellular location is the lipid droplet. It is found in the membrane. It carries out the reaction an 11beta-hydroxysteroid + NADP(+) = an 11-oxosteroid + NADPH + H(+). Its function is as follows. Has dehydrogenase activity against 11 beta-hydroxysteroid and 17 beta-hydroxysteroid. May be involved in signal transduction regulated by various sterols. This chain is 11-beta-hydroxysteroid dehydrogenase B, found in Arachis hypogaea (Peanut).